Here is a 124-residue protein sequence, read N- to C-terminus: uncharacterized protein (124 aa).

Disordered stretches follow at residues 1–31 and 59–124; these read MAQHAFQDQEQEEGRNSRQQKRKSFEDTMKP and EDAR…YPQP. Composition is skewed to polar residues over residues 65–86 and 98–124; these read GMSSVTPTSSASKIGTKTSDAA and TGEQPSGIQAQNLRGQSSDQSACYPQP.

This is an uncharacterized protein from Bos taurus (Bovine).